A 347-amino-acid polypeptide reads, in one-letter code: Glucose 1-dehydrogenase (347 aa).

Cysteine 39 is a binding site for Zn(2+). Threonine 41 contributes to the substrate binding site. Residues histidine 64 and glutamate 65 each contribute to the Zn(2+) site. The substrate site is built by glutamate 110 and glutamate 146. Glutamate 146 serves as a coordination point for Zn(2+). Residues 178-181, 260-262, and 289-291 each bind NADP(+); these read AGPV, LGV, and SVN. Residue asparagine 291 participates in substrate binding.

This sequence belongs to the zinc-containing alcohol dehydrogenase family. Glucose 1-dehydrogenase subfamily. As to quaternary structure, homodimer. Zn(2+) is required as a cofactor.

It catalyses the reaction D-glucose + NAD(+) = D-glucono-1,5-lactone + NADH + H(+). It carries out the reaction D-glucose + NADP(+) = D-glucono-1,5-lactone + NADPH + H(+). In terms of biological role, catalyzes the NAD(P)(+)-dependent oxidation of D-glucose to D-gluconate via gluconolactone. To a lesser extent, is also active with xylose as substrate, but mannose, arabinose, galactose, fructose 6-phosphate, glucose 6-phosphate, glycerinaldehyde 3-phosphate, ribose, sorbitol, ethanol, erythritol, or lactose are not oxidized by the enzyme. Can utilize both NAD(+) and NADP(+) as electron acceptor, with a marked preference for NADP(+). Is involved in the degradation of glucose through a non-phosphorylative variant of the Entner-Doudoroff pathway. This chain is Glucose 1-dehydrogenase (gdh), found in Thermoproteus tenax (strain ATCC 35583 / DSM 2078 / JCM 9277 / NBRC 100435 / Kra 1).